Consider the following 457-residue polypeptide: MSLATLQGQSLDFAVKHSLDDLLKNPVRFRPAVVSSPSVPEGTYTVLNNPKQSTVSRKSFSAPTSPTRNKRSGSSSQEYKKSSGTRGDGANDFVDEDPAFIPPARILFPEEKLSMEWDNIMPNAPGLVNLGNTCFMNSVLQLMTQTPPLVQYLLSGQHSLSCRMNACVLCRMEQHVARAYPNKGTKRASAFKPSGIQSMLKVISSHFRPYRQEDAHEFMRYLVDAWQKSCLQNHKNLDHPSRETSVVHRIFGGYLRQQILCSVCKKPSNTYQALLDLSVDAKGSSLADSLKHFVHAEKLTKQNKYRCENCKQLVDASKQMTIYRAPNILTIHFKRFTFNGFQSSKISKQISYPESFNLGPYMSDPNCSCWYELIGVLVHAGGSTRSGHYYSFCKSSNGVWLKFDDDFVSNSSIDRVLNQQAYILQYKRKSTSSSKHKLNTENTVTKTSNKKRRKISF.

Residues Val34–Asp97 are disordered. A compositionally biased stretch (polar residues) spans Thr45–Thr67. Ser61 carries the post-translational modification Phosphoserine. Thr64 carries the phosphothreonine modification. Residue Ser65 is modified to Phosphoserine. The USP domain maps to Pro125–Lys429. Cys134 functions as the Nucleophile in the catalytic mechanism. Residue His388 is the Proton acceptor of the active site. A disordered region spans residues Ser434–Phe457. The span at Ser448–Phe457 shows a compositional bias: basic residues.

Belongs to the peptidase C19 family.

It catalyses the reaction Thiol-dependent hydrolysis of ester, thioester, amide, peptide and isopeptide bonds formed by the C-terminal Gly of ubiquitin (a 76-residue protein attached to proteins as an intracellular targeting signal).. The polypeptide is Probable ubiquitin carboxyl-terminal hydrolase 16 (ubp16) (Schizosaccharomyces pombe (strain 972 / ATCC 24843) (Fission yeast)).